A 355-amino-acid polypeptide reads, in one-letter code: Mitogen-activated protein kinase (355 aa).

The Protein kinase domain maps to 23-311 (YDIQDVVGEG…VEEALKHPYL (289 aa)). Residues 29 to 37 (VGEGAYGVV) and K52 contribute to the ATP site. D147 serves as the catalytic Proton acceptor. Position 183 is a phosphothreonine (T183). The TXY signature appears at 183 to 185 (TEY). Y185 is modified (phosphotyrosine).

It belongs to the protein kinase superfamily. CMGC Ser/Thr protein kinase family. MAP kinase subfamily. In terms of processing, dually phosphorylated on Thr-183 and Tyr-185, which activates the enzyme.

It is found in the nucleus. The enzyme catalyses L-seryl-[protein] + ATP = O-phospho-L-seryl-[protein] + ADP + H(+). It catalyses the reaction L-threonyl-[protein] + ATP = O-phospho-L-threonyl-[protein] + ADP + H(+). Its activity is regulated as follows. Activated by tyrosine and threonine phosphorylation. Responds to activation by environmental stress by phosphorylating downstream targets. The sequence is that of Mitogen-activated protein kinase (MAPK) from Fusarium vanettenii (Neocosmospora pisi).